A 222-amino-acid polypeptide reads, in one-letter code: Uridine diphosphate glucose pyrophosphatase NUDT14 (222 aa).

Residues 38–206 (KTHDSVTILM…DVPKTLGVIF (169 aa)) enclose the Nudix hydrolase domain. A Nudix box motif is present at residues 111 to 129 (PGLSLEEVACKEAWEECGY).

Belongs to the Nudix hydrolase family. Homodimer. Mg(2+) serves as cofactor.

It is found in the cytoplasm. It catalyses the reaction UDP-sugar + H2O = UMP + alpha-D-aldose 1-phosphate.. In terms of biological role, hydrolyzes UDP-glucose to glucose 1-phosphate and UMP and ADP-ribose to ribose 5-phosphate and AMP. The physiological substrate is probably UDP-glucose. Poor activity on other substrates such as ADP-glucose, CDP-glucose, GDP-glucose and GDP-mannose. This chain is Uridine diphosphate glucose pyrophosphatase NUDT14 (NUDT14), found in Bos taurus (Bovine).